The following is a 254-amino-acid chain: MAQPFEDWYKNLPIVTKIYMTGCVVTSVSVYLGLVGPLRLYLNFPLVFGKYEFWRLFTNFFFYDEIGMNFFFHMYFLVRHSRLLEESSFRGRSADYLFMWIFGSFLLLIMDAFLFYTKIVTKVLFLAPSIAFMVIYVWSRRNPNMHISFLGLFTFSAPYLPWVILIMGYLFNHDLTTDLLGAVAGHAYYFLEDAYPLISNRRLLKTPGFLKNLMDGQEQPIVDAHQQQEVQQAQQQEVQQPVQNFLNEDDLDQQ.

Over 1-17 the chain is Cytoplasmic; sequence MAQPFEDWYKNLPIVTK. A helical membrane pass occupies residues 18 to 38; the sequence is IYMTGCVVTSVSVYLGLVGPL. The Lumenal portion of the chain corresponds to 39-95; that stretch reads RLYLNFPLVFGKYEFWRLFTNFFFYDEIGMNFFFHMYFLVRHSRLLEESSFRGRSAD. Residues 96-116 form a helical membrane-spanning segment; it reads YLFMWIFGSFLLLIMDAFLFY. Residues 117–118 are Cytoplasmic-facing; sequence TK. Residues 119–139 traverse the membrane as a helical segment; sequence IVTKVLFLAPSIAFMVIYVWS. The Lumenal segment spans residues 140–146; sequence RRNPNMH. A helical membrane pass occupies residues 147 to 167; it reads ISFLGLFTFSAPYLPWVILIM. Residues 168 to 254 are Cytoplasmic-facing; it reads GYLFNHDLTT…FLNEDDLDQQ (87 aa).

Belongs to the derlin family.

The protein localises to the endoplasmic reticulum membrane. May be involved in the degradation process of specific misfolded endoplasmic reticulum (ER) luminal proteins. May also be involved in endoplasmic reticulum stress-induced pre-emptive quality control, a mechanism that selectively attenuates the translocation of newly synthesized proteins into the endoplasmic reticulum and reroutes them to the cytosol for proteasomal degradation. This Dictyostelium discoideum (Social amoeba) protein is Probable derlin-2 homolog (derl2).